The primary structure comprises 513 residues: Na(+)/H(+) antiporter NhaB (513 aa).

12 helical membrane-spanning segments follow: residues 23-43, 52-72, 97-117, 120-140, 144-164, 202-222, 238-258, 303-323, 348-368, 391-411, 447-467, and 475-495; these read LALIIFLIVNPLIFLISPFVA, IFTLAMALKCYPLLPGGLLAI, LLLMFMVAGIYFMKQLLLFIF, LLLSIRSKMLLSLSFCVAAAF, FLDALTVVAVVISVAVGFYGI, LMMHAGVGTALGGVMTMVGEP, FFLRMSPVTVPVLICGLLTCL, AIIGVWLVTALALHLAEVGLI, TESLPFTALLTVFFSVVAVII, LFYIFNGLLSSISDNVFVGTI, ATPNGQAAFLFLLTSALAPLI, and VWMALPYTLVLTLVGLLCVEF.

It belongs to the NhaB Na(+)/H(+) (TC 2.A.34) antiporter family.

Its subcellular location is the cell inner membrane. It catalyses the reaction 2 Na(+)(in) + 3 H(+)(out) = 2 Na(+)(out) + 3 H(+)(in). In terms of biological role, na(+)/H(+) antiporter that extrudes sodium in exchange for external protons. The chain is Na(+)/H(+) antiporter NhaB from Shigella sonnei (strain Ss046).